The primary structure comprises 164 residues: UPF0304 protein PM1500 (164 aa).

The protein belongs to the UPF0304 family.

This Pasteurella multocida (strain Pm70) protein is UPF0304 protein PM1500.